The primary structure comprises 231 residues: MVSFTTILVAATAALVAANPVPPSIDEMREIYVKSRDLHARGGTPSSTGTHDGFYYSWWTDNGAQATYTNNAGGSYSITWSGNGNLVGGKGWNPGSARNVTYSANYRPNGNSYLSVYGWTRNPLVEYYVVENFGTYDPSSQASRKGTINVDGATYQVAQSTRTNQPSIDGTRTFQQYWSVRQQKRSSGTVDMKKHFDAWASMGMKLGTHDYQIVATEGYFSSGSSTVTIQR.

The N-terminal stretch at 1–18 (MVSFTTILVAATAALVAA) is a signal peptide. One can recognise a GH11 domain in the interval 42–230 (GGTPSSTGTH…SSGSSTVTIQ (189 aa)). N-linked (GlcNAc...) asparagine glycosylation occurs at asparagine 99. The active-site Nucleophile is glutamate 126. Glutamate 217 acts as the Proton donor in catalysis.

Belongs to the glycosyl hydrolase 11 (cellulase G) family.

It localises to the secreted. It catalyses the reaction Endohydrolysis of (1-&gt;4)-beta-D-xylosidic linkages in xylans.. It functions in the pathway glycan degradation; xylan degradation. Its function is as follows. Endo-1,4-beta-xylanase involved in the hydrolysis of xylan, a major structural heterogeneous polysaccharide found in plant biomass representing the second most abundant polysaccharide in the biosphere, after cellulose. This is Endo-1,4-beta-xylanase 4 (XYL4) from Pyricularia grisea (Crabgrass-specific blast fungus).